A 412-amino-acid polypeptide reads, in one-letter code: Putative competence-damage inducible protein (412 aa).

Belongs to the CinA family.

The chain is Putative competence-damage inducible protein from Bacillus cereus (strain Q1).